The sequence spans 545 residues: Chaperonin GroEL 2 (545 aa).

Residues 29-32, 86-90, Gly-413, 479-481, and Asp-495 contribute to the ATP site; these read TLGP, DGTTT, and NAA.

This sequence belongs to the chaperonin (HSP60) family. As to quaternary structure, forms a cylinder of 14 subunits composed of two heptameric rings stacked back-to-back. Interacts with the co-chaperonin GroES.

The protein resides in the cytoplasm. The catalysed reaction is ATP + H2O + a folded polypeptide = ADP + phosphate + an unfolded polypeptide.. Its function is as follows. Together with its co-chaperonin GroES, plays an essential role in assisting protein folding. The GroEL-GroES system forms a nano-cage that allows encapsulation of the non-native substrate proteins and provides a physical environment optimized to promote and accelerate protein folding. In Prochlorococcus marinus (strain MIT 9301), this protein is Chaperonin GroEL 2.